The primary structure comprises 461 residues: Vitamin K-dependent protein C (461 aa).

A signal peptide spans 1 to 18; sequence MWQFRIFLLFASTWGISG. Positions 19–41 are excised as a propeptide; sequence VSAHPDPVFSSSEGAHQVLRVRR. In terms of domain architecture, Gla spans 42–87; that stretch reads ANSFLEEVRAGSLERECMEEICDFEEAQEIFQNVEDTLAFWIKYFD. Residues E47, E48, E55, E57, E60, E61, E66, E67, E70, and E76 each carry the 4-carboxyglutamate modification. C58 and C63 form a disulfide bridge. Cystine bridges form between C91–C110, C100–C105, C104–C119, C121–C130, C139–C150, C146–C159, C161–C174, C182–C320, and C239–C255. EGF-like domains are found at residues 96-131 and 135-175; these read LDHQ…RFCQ and GFQD…MHCR. D112 carries the post-translational modification (3R)-3-hydroxyaspartate. Residues 213-450 form the Peptidase S1 domain; sequence IVNGTLTKQG…YLKWIHSYIG (238 aa). N-linked (GlcNAc...) asparagine glycosylation occurs at N215. The Charge relay system role is filled by H254. Residue N291 is glycosylated (N-linked (GlcNAc...) asparagine). D300 (charge relay system) is an active-site residue. N355 carries an N-linked (GlcNAc...) asparagine glycan. 2 cysteine pairs are disulfide-bonded: C373-C387 and C398-C426. The Charge relay system role is filled by S402.

It belongs to the peptidase S1 family. As to quaternary structure, synthesized as a single chain precursor, which is cleaved into a light chain and a heavy chain held together by a disulfide bond. The enzyme is then activated by thrombin, which cleaves a tetradecapeptide from the amino end of the heavy chain; this reaction, which occurs at the surface of endothelial cells, is strongly promoted by thrombomodulin. In terms of processing, the vitamin K-dependent, enzymatic carboxylation of some Glu residues allows the modified protein to bind calcium. Post-translationally, the iron and 2-oxoglutarate dependent 3-hydroxylation of aspartate and asparagine is (R) stereospecific within EGF domains. In terms of tissue distribution, plasma; synthesized in the liver.

The protein localises to the secreted. It localises to the golgi apparatus. It is found in the endoplasmic reticulum. It catalyses the reaction Degradation of blood coagulation factors Va and VIIIa.. Its function is as follows. Protein C is a vitamin K-dependent serine protease that regulates blood coagulation by inactivating factors Va and VIIIa in the presence of calcium ions and phospholipids. Exerts a protective effect on the endothelial cell barrier function. The polypeptide is Vitamin K-dependent protein C (Proc) (Rattus norvegicus (Rat)).